A 316-amino-acid polypeptide reads, in one-letter code: Ribosomal RNA small subunit methyltransferase H (316 aa).

S-adenosyl-L-methionine-binding positions include S35 to H37, D55, F84, D105, and Q112.

It belongs to the methyltransferase superfamily. RsmH family.

It is found in the cytoplasm. The catalysed reaction is cytidine(1402) in 16S rRNA + S-adenosyl-L-methionine = N(4)-methylcytidine(1402) in 16S rRNA + S-adenosyl-L-homocysteine + H(+). Its function is as follows. Specifically methylates the N4 position of cytidine in position 1402 (C1402) of 16S rRNA. The polypeptide is Ribosomal RNA small subunit methyltransferase H (Streptococcus equi subsp. equi (strain 4047)).